Here is a 96-residue protein sequence, read N- to C-terminus: Putative translation initiation factor IF-1, chloroplastic (96 aa).

In terms of domain architecture, S1-like spans 18–57 (INYVSGKIRHSFIRILPGDRVKIEVSPYDSTKGRIIYRLH).

This sequence belongs to the IF-1 family. In terms of assembly, component of the 30S ribosomal translation pre-initiation complex which assembles on the 30S ribosome in the order IF-2 and IF-3, IF-1 and N-formylmethionyl-tRNA(fMet); mRNA recruitment can occur at any time during PIC assembly.

The protein localises to the plastid. It is found in the chloroplast. Its function is as follows. One of the essential components for the initiation of protein synthesis. Stabilizes the binding of IF-2 and IF-3 on the 30S subunit to which N-formylmethionyl-tRNA(fMet) subsequently binds. Helps modulate mRNA selection, yielding the 30S pre-initiation complex (PIC). Upon addition of the 50S ribosomal subunit IF-1, IF-2 and IF-3 are released leaving the mature 70S translation initiation complex. The protein is Putative translation initiation factor IF-1, chloroplastic (infA) of Nicotiana tabacum (Common tobacco).